The sequence spans 686 residues: MSKAGKITAAISGAFLLLIVVAIILIATFDWNRLKPTINQKVSAELNRPFAIRGDLGVVWERQKQETGWRSWVPWPHVHAEDIILGNPPDIPEVTMVHLPRVEATLAPLALLTKTVWLPWIKLEKPDARLIRLSEKNNNWTFNLANDDNKDANAKPSAWSFRLDNILFDQGRIAIDDKVSKADLEIFVDPLGKPLPFSEVTGSKGKADKEKVGDYVFGLKAQGRYNGEPLTGTGKIGGMLALRGEGTPFPVQADFRSGNTRVAFDGVVNDPMKMGGVDLRLKFSGDSLGDLYELTGVLLPDTPPFETDGRLVAKIDTEKSSVFDYRGFNGRIGDSDIHGSLVYTTGKPRPKLEGDVESRQLRLADLGPLIGVDSGKGAEKSKRSEQKKGEKSVQPAGKVLPYDRFETDKWDVMDADVRFKGRRIEHGSSLPISDLSTHIILKNADLRLQPLKFGMAGGSIAANIHLEGDKKPMQGRADIQARRLKLKELMPDVELMQKTLGEMNGDAELRGSGNSVAALLGNSNGNLKLLMNDGLVSRNLMEIVGLNVGNYIVGAIFGDDEVRVNCAAANLNIANGVARPQIFAFDTENALINVTGTASFASEQLDLTIDPESKGIRIITLRSPLYVRGTFKNPQAGVKAGPLIARGAVAAALATLVTPAAALLALISPSEGEANQCRTILSQMKK.

Residues 1–6 are Cytoplasmic-facing; the sequence is MSKAGK. A helical membrane pass occupies residues 7 to 27; that stretch reads ITAAISGAFLLLIVVAIILIA. Topologically, residues 28 to 686 are periplasmic; that stretch reads TFDWNRLKPT…CRTILSQMKK (659 aa). A disordered region spans residues 372–396; the sequence is VDSGKGAEKSKRSEQKKGEKSVQPA. Over residues 376–391 the composition is skewed to basic and acidic residues; that stretch reads KGAEKSKRSEQKKGEK.

The protein belongs to the AsmA family.

Its subcellular location is the cell inner membrane. The sequence is that of AsmA family protein YhjG (yhjG) from Escherichia coli (strain K12).